Reading from the N-terminus, the 357-residue chain is Ion-translocating oxidoreductase complex subunit D (357 aa).

3 consecutive transmembrane segments (helical) span residues 35 to 55 (VWLYGWPALNLLLITLVTVLV), 88 to 108 (LPPWAPWWIGVIGGLLAVVLG), and 119 to 139 (LFNPAMVARVALLIAFPVEMT). Thr176 is modified (FMN phosphoryl threonine). 5 consecutive transmembrane segments (helical) span residues 209-229 (APGSLAEGSALLLALGGVYLI), 233-253 (VIAWEIPAVMLATLAVLATVF), 261-281 (YADAGVHILAGSTLLAAFFIA), 295-315 (AVFAAGCAVIVWVVRTYGGYP), and 316-336 (EATAFAVLLMNAFTPLIDHWI).

Belongs to the NqrB/RnfD family. As to quaternary structure, the complex is composed of six subunits: RnfA, RnfB, RnfC, RnfD, RnfE and RnfG. FMN is required as a cofactor.

Its subcellular location is the cell inner membrane. Part of a membrane-bound complex that couples electron transfer with translocation of ions across the membrane. This Halorhodospira halophila (strain DSM 244 / SL1) (Ectothiorhodospira halophila (strain DSM 244 / SL1)) protein is Ion-translocating oxidoreductase complex subunit D.